We begin with the raw amino-acid sequence, 516 residues long: MKALHLTGNTLTLDEVREVVYEQRPVLLDSDARAAVDRARAVIEDVVANDRLAYAVTTGVGKLSDVRIPPAENRTLQLNLMRSHAVGVGDPLSEQVSRAMMLLRANSLCKGWSGVRGLVIDTLCEMLNRGVHPVIPSQGSVGASGDLAPLAHQGLVLIGEGEAFYQGKRVSGAEALRAAGIKPITLEAKETISLINGTQAMLAVGLLAVLDAEILAETADAVGALALDVLQGTDAAFDERIHKARPHSGQIQVAANLRRLLAGSQIHESHKDCARVQDAYSLRCMPQVHGAVRDTIHYCRSVFEVEMNSAVDNPLVFPEPKKVGERSDAPVHGDIISGGNFHGEPVAFALDFLAIALSALAGISERRIERLVNPALSEGLPAFLAPGAGLNSGFMMPQVTAAALVSENKVLSHPASVDSITTSGNKEDFVSMGMTAALKLQRIVQNTRNVMAIEALAAAQALDFKAPLKTTKLLQKVHAAVRAVSPQITEDRILTADFAAAEALIRSGKLAAAARN.

The segment at residues 143–145 (ASG) is a cross-link (5-imidazolinone (Ala-Gly)). S144 is subject to 2,3-didehydroalanine (Ser).

The protein belongs to the PAL/histidase family. In terms of processing, contains an active site 4-methylidene-imidazol-5-one (MIO), which is formed autocatalytically by cyclization and dehydration of residues Ala-Ser-Gly.

The protein localises to the cytoplasm. It catalyses the reaction L-histidine = trans-urocanate + NH4(+). It participates in amino-acid degradation; L-histidine degradation into L-glutamate; N-formimidoyl-L-glutamate from L-histidine: step 1/3. This chain is Histidine ammonia-lyase, found in Koribacter versatilis (strain Ellin345).